The following is a 340-amino-acid chain: Probable protein phosphatase 2C 21 (340 aa).

A disordered region spans residues 1–21 (MGASPSRPLEQSPSSSEGENH). Residues 24 to 305 (KYASYTTQGF…DNATAILVKF (282 aa)) form the PPM-type phosphatase domain. The Mn(2+) site is built by aspartate 58, glycine 59, aspartate 254, and aspartate 296. Positions 311–340 (DPDEVASARDEHQHNPEGGDEKLDINNDND) are disordered. A compositionally biased stretch (basic and acidic residues) spans 316–340 (ASARDEHQHNPEGGDEKLDINNDND).

This sequence belongs to the PP2C family. Mg(2+) is required as a cofactor. The cofactor is Mn(2+).

It carries out the reaction O-phospho-L-seryl-[protein] + H2O = L-seryl-[protein] + phosphate. It catalyses the reaction O-phospho-L-threonyl-[protein] + H2O = L-threonyl-[protein] + phosphate. The protein is Probable protein phosphatase 2C 21 of Oryza sativa subsp. japonica (Rice).